The chain runs to 409 residues: tRNA(Met) cytidine acetate ligase (409 aa).

ATP is bound by residues 7 to 20 (VVEY…HLHH), Gly-102, Asn-169, and Arg-194.

It belongs to the TmcAL family.

The protein localises to the cytoplasm. It catalyses the reaction cytidine(34) in elongator tRNA(Met) + acetate + ATP = N(4)-acetylcytidine(34) in elongator tRNA(Met) + AMP + diphosphate. In terms of biological role, catalyzes the formation of N(4)-acetylcytidine (ac(4)C) at the wobble position of elongator tRNA(Met), using acetate and ATP as substrates. First activates an acetate ion to form acetyladenylate (Ac-AMP) and then transfers the acetyl group to tRNA to form ac(4)C34. The polypeptide is tRNA(Met) cytidine acetate ligase (Clostridium botulinum (strain Loch Maree / Type A3)).